Consider the following 213-residue polypeptide: Peptidyl-prolyl cis-trans isomerase B (213 aa).

Residues 1–23 (MAVLRVLCGLLLVSILFLGFVLS) form the signal peptide. Residues 35–197 (FFDIEVDEQP…KSVKIANCGH (163 aa)) form the PPIase cyclophilin-type domain. Residues 210-213 (DAAE) carry the Prevents secretion from ER motif.

Belongs to the cyclophilin-type PPIase family. PPIase B subfamily.

Its subcellular location is the endoplasmic reticulum lumen. It catalyses the reaction [protein]-peptidylproline (omega=180) = [protein]-peptidylproline (omega=0). Inhibited by cyclosporin A (CsA). PPIases accelerate the folding of proteins. It catalyzes the cis-trans isomerization of proline imidic peptide bonds in oligopeptides. This is Peptidyl-prolyl cis-trans isomerase B from Schistosoma japonicum (Blood fluke).